A 337-amino-acid polypeptide reads, in one-letter code: Interferon gamma receptor 2 (337 aa).

An N-terminal signal peptide occupies residues M1–A21. Topologically, residues S28–Q247 are extracellular. The Fibronectin type-III 1 domain maps to P31–M129. Residues N56 and N85 are each glycosylated (N-linked (GlcNAc...) asparagine). An intrachain disulfide couples C86 to C94. 4 N-linked (GlcNAc...) asparagine glycosylation sites follow: N110, N137, N219, and N231. Residues P142–D240 enclose the Fibronectin type-III 2 domain. A disulfide bridge connects residues C209 and C234. The chain crosses the membrane as a helical span at residues V248–F268. Over L269 to L337 the chain is Cytoplasmic. A Dileucine internalization motif motif is present at residues L276–I277.

Belongs to the type II cytokine receptor family. As to quaternary structure, heterodimer with IFNGR1, to form the IFNG receptor complex. Interacts (via intracellular domain) with JAK2. As to expression, expressed in T-cells (at protein level).

Its subcellular location is the cell membrane. The protein localises to the cytoplasmic vesicle membrane. The protein resides in the golgi apparatus membrane. It is found in the endoplasmic reticulum membrane. It localises to the cytoplasm. In terms of biological role, associates with IFNGR1 to form a receptor for the cytokine interferon gamma (IFNG). Ligand binding stimulates activation of the JAK/STAT signaling pathway. Required for signal transduction in contrast to other receptor subunit responsible for ligand binding. In Homo sapiens (Human), this protein is Interferon gamma receptor 2.